Here is an 873-residue protein sequence, read N- to C-terminus: Leucine--tRNA ligase (873 aa).

A 'HIGH' region motif is present at residues 42-52 (PYPSGKLHMGH). The interval 624–643 (PVEIGGTEKMSKSKNNGVDP) is disordered. The short motif at 632 to 636 (KMSKS) is the 'KMSKS' region element. Lys635 serves as a coordination point for ATP.

Belongs to the class-I aminoacyl-tRNA synthetase family.

The protein resides in the cytoplasm. The catalysed reaction is tRNA(Leu) + L-leucine + ATP = L-leucyl-tRNA(Leu) + AMP + diphosphate. This Pseudomonas aeruginosa (strain LESB58) protein is Leucine--tRNA ligase.